We begin with the raw amino-acid sequence, 1007 residues long: Inversin-A (1007 aa).

ANK repeat units lie at residues 9-39 (SLAS…VIDQ), 43-72 (LGRT…QVNH), 76-105 (SGRT…DCTH), 109-140 (RDIT…QVDA), 144-173 (RKQT…NIGI), 177-209 (EGKI…TESL), 216-246 (EGRT…NVAP), 250-279 (LFRT…SPNI), 284-313 (QGAT…VRDE), 317-346 (EGRT…ELEV), 352-381 (YGGT…QVDA), 385-414 (MKHT…KVHL), 418-447 (DGRS…NPDA), 451-480 (EGRT…DPNI), 484-513 (NGRT…FPNQ), and 519-549 (ERYT…SIAA). Residues 486–494 (RTALHWSCN) carry the D-box 1 motif. One can recognise an IQ 1 domain in the interval 551 to 580 (QDIAASKIQAVYKGHKVRRAFQERKNLLMK). Basic and acidic residues-rich tracts occupy residues 585-599 (RKGA…ENRQ) and 608-652 (GKQK…HQEE). Disordered regions lie at residues 585–837 (RKGA…KEFS) and 868–893 (SAKS…SALK). The segment covering 684–701 (IQSSPIEHVHTNSIQTRM) has biased composition (polar residues). Over residues 702–712 (SPSRTSISHSS) the composition is skewed to low complexity. Over residues 727–745 (NPTQNNTQPRRTSRPQIES) the composition is skewed to polar residues. Residues 751 to 771 (HRIEDLVQKESRRKSHREERK) are compositionally biased toward basic and acidic residues. The segment covering 772–784 (GSHRQRASSHHRL) has biased composition (basic residues). Positions 870–893 (KSGQRPLTETQSPEKACQGSSALK) are enriched in polar residues. A D-box 2 motif is present at residues 964–972 (RKQLFQRKK). An IQ 2 domain is found at 971–1000 (KKHAATVIQKAWRTYCIRKSSRKTRHSHLR).

Interacts with apc2. Binds calmodulin.

The protein resides in the cytoplasm. The protein localises to the cytoskeleton. Required for normal renal development and establishment of left-right axis. Probably acts as a molecular switch between different Wnt signaling pathways. Inhibits the canonical Wnt pathway by targeting cytoplasmic disheveled for degradation by the ubiquitin-proteasome. This suggests that it is required in renal development to oppose the repression of terminal differentiation of tubular epithelial cells by Wnt signaling. Plays a central role in convergent extension movements in gastrulating embryos, a processus regulated by Wnt signaling. The polypeptide is Inversin-A (invs-a) (Xenopus laevis (African clawed frog)).